A 328-amino-acid chain; its full sequence is Nickel import system permease protein NikB (328 aa).

6 consecutive transmembrane segments (helical) span residues 11–31 (LMQM…LMKL), 104–124 (LLIS…LGII), 139–159 (VIST…LLFI), 170–190 (ILSQ…AYII), 229–249 (ILPI…GTVV), and 279–299 (VLFI…LTLL). In terms of domain architecture, ABC transmembrane type-1 spans 100–297 (APITLLISFS…IINTIADLLT (198 aa)).

It belongs to the binding-protein-dependent transport system permease family. OppBC subfamily. As to quaternary structure, the complex is composed of two ATP-binding proteins (NikD and NikE), two transmembrane proteins (NikB and NikC) and a solute-binding protein (NikA).

It is found in the cell membrane. Functionally, part of the ABC transporter complex NikABCDE (Opp2) involved in nickel import. Probably responsible for the translocation of the substrate across the membrane. The protein is Nickel import system permease protein NikB of Staphylococcus aureus (strain USA300).